The sequence spans 452 residues: Transcription factor ETV6 (452 aa).

The span at 1–10 shows a compositional bias: polar residues; that stretch reads MSETPAQCSI. The tract at residues 1–30 is disordered; it reads MSETPAQCSIKQERISYTPPESPVPSYASS. Residue Lys11 is modified to N6-acetyllysine; alternate. Lys11 is covalently cross-linked (Glycyl lysine isopeptide (Lys-Gly) (interchain with G-Cter in SUMO2); alternate). Thr18 is modified (phosphothreonine). Ser22 carries the phosphoserine modification. Residues 40–124 form the PNT domain; that stretch reads ALRMEEDSIR…ELLQHILKQR (85 aa). The interval 158-262 is disordered; sequence VQRTPRPSVD…PKPSSPRQES (105 aa). A phosphoserine mark is found at Ser213 and Ser238. Over residues 230–250 the composition is skewed to polar residues; the sequence is QESYPLSVSPMENNHCPASSE. Phosphoserine; by MAPK14 is present on Ser257. Residue Lys288 forms a Glycyl lysine isopeptide (Lys-Gly) (interchain with G-Cter in SUMO2) linkage. An N6-acetyllysine; alternate modification is found at Lys302. Residue Lys302 forms a Glycyl lysine isopeptide (Lys-Gly) (interchain with G-Cter in SUMO2); alternate linkage. Ser323 carries the phosphoserine modification. Positions 339 to 420 form a DNA-binding region, ETS; that stretch reads RLLWDYVYQL…PGQRLLFRFM (82 aa). Glycyl lysine isopeptide (Lys-Gly) (interchain with G-Cter in SUMO2) cross-links involve residues Lys403 and Lys421.

This sequence belongs to the ETS family. As to quaternary structure, can form homodimers or heterodimers with TEL2 or FLI1. Interacts with L3MBTL1 and HDAC9. In terms of processing, phosphorylation of Ser-257 by MAPK14 (p38) inhibits ETV6 transcriptional repression. Ubiquitous.

It localises to the nucleus. Transcriptional repressor; binds to the DNA sequence 5'-CCGGAAGT-3'. Plays a role in hematopoiesis and malignant transformation. This is Transcription factor ETV6 (ETV6) from Homo sapiens (Human).